A 151-amino-acid chain; its full sequence is Abdominal ganglion neuropeptide L11 (151 aa).

The first 25 residues, 1–25 (MPCTPNSHRLLLVTALCLLITSLFA), serve as a signal peptide directing secretion.

Its subcellular location is the secreted. This is Abdominal ganglion neuropeptide L11 from Aplysia californica (California sea hare).